Reading from the N-terminus, the 197-residue chain is Large ribosomal subunit protein uL13C (197 aa).

Belongs to the universal ribosomal protein uL13 family. In terms of assembly, component of the large ribosomal subunit (LSU). Mature yeast ribosomes consist of a small (40S) and a large (60S) subunit. The 40S small subunit contains 1 molecule of ribosomal RNA (18S rRNA) and at least 33 different proteins. The large 60S subunit contains 3 rRNA molecules (25S, 5.8S and 5S rRNA) and at least 46 different proteins.

The protein localises to the cytoplasm. Its subcellular location is the nucleus. The protein resides in the nucleolus. Its function is as follows. Component of the ribosome, a large ribonucleoprotein complex responsible for the synthesis of proteins in the cell. The small ribosomal subunit (SSU) binds messenger RNAs (mRNAs) and translates the encoded message by selecting cognate aminoacyl-transfer RNA (tRNA) molecules. The large subunit (LSU) contains the ribosomal catalytic site termed the peptidyl transferase center (PTC), which catalyzes the formation of peptide bonds, thereby polymerizing the amino acids delivered by tRNAs into a polypeptide chain. The nascent polypeptides leave the ribosome through a tunnel in the LSU and interact with protein factors that function in enzymatic processing, targeting, and the membrane insertion of nascent chains at the exit of the ribosomal tunnel. The chain is Large ribosomal subunit protein uL13C (rpl1603) from Schizosaccharomyces pombe (strain 972 / ATCC 24843) (Fission yeast).